A 596-amino-acid chain; its full sequence is V-type ATP synthase alpha chain (596 aa).

233–240 (GPFGAGKT) provides a ligand contact to ATP.

This sequence belongs to the ATPase alpha/beta chains family.

The enzyme catalyses ATP + H2O + 4 H(+)(in) = ADP + phosphate + 5 H(+)(out). Its function is as follows. Produces ATP from ADP in the presence of a proton gradient across the membrane. The V-type alpha chain is a catalytic subunit. The sequence is that of V-type ATP synthase alpha chain from Streptococcus sanguinis (strain SK36).